The chain runs to 282 residues: Large ribosomal subunit protein uL2 (282 aa).

Disordered stretches follow at residues 31-54 (KRLT…TRHI) and 223-282 (LAMN…NTQR). Basic residues-rich tracts occupy residues 34 to 54 (TKPV…TRHI) and 270 to 282 (VTRR…NTQR).

This sequence belongs to the universal ribosomal protein uL2 family. As to quaternary structure, part of the 50S ribosomal subunit. Forms a bridge to the 30S subunit in the 70S ribosome.

Its function is as follows. One of the primary rRNA binding proteins. Required for association of the 30S and 50S subunits to form the 70S ribosome, for tRNA binding and peptide bond formation. It has been suggested to have peptidyltransferase activity; this is somewhat controversial. Makes several contacts with the 16S rRNA in the 70S ribosome. This is Large ribosomal subunit protein uL2 from Anaeromyxobacter dehalogenans (strain 2CP-1 / ATCC BAA-258).